We begin with the raw amino-acid sequence, 310 residues long: N-acetylmuramic acid 6-phosphate etherase (310 aa).

One can recognise an SIS domain in the interval 64–227 (ITSRLKSNGR…STSVMIKLGK (164 aa)). Glu92 functions as the Proton donor in the catalytic mechanism. Glu123 is a catalytic residue.

It belongs to the GCKR-like family. MurNAc-6-P etherase subfamily. In terms of assembly, homodimer.

It carries out the reaction N-acetyl-D-muramate 6-phosphate + H2O = N-acetyl-D-glucosamine 6-phosphate + (R)-lactate. It functions in the pathway amino-sugar metabolism; N-acetylmuramate degradation. Functionally, specifically catalyzes the cleavage of the D-lactyl ether substituent of MurNAc 6-phosphate, producing GlcNAc 6-phosphate and D-lactate. The chain is N-acetylmuramic acid 6-phosphate etherase from Prochlorococcus marinus (strain NATL2A).